The primary structure comprises 518 residues: AarF domain-containing kinase 1 (518 aa).

Residues 149 to 468 (SFEREPLGTA…SKCCVQSSYA (320 aa)) enclose the Protein kinase domain. Residues 155–163 (LGTASLAQV) and lysine 177 each bind ATP. Aspartate 309 serves as the catalytic Proton acceptor.

Belongs to the protein kinase superfamily. ADCK protein kinase family.

It localises to the mitochondrion. Essential for maintaining mitochondrial cristae formation and mitochondrial function by acting via YME1L to regulate the mitochondrial structural proteins Opa1 and Mitofilin. This function is likely to be kinase-independent. Functions in tracheal development and larval molting probably by acting in sterol modification and/or intracellular lipid trafficking. The action of this enzyme is not yet clear. It is not known if it has protein kinase activity and what type of substrate it would phosphorylate (Ser, Thr or Tyr). This chain is AarF domain-containing kinase 1, found in Drosophila melanogaster (Fruit fly).